The chain runs to 558 residues: Formate--tetrahydrofolate ligase (558 aa).

66–73 (TPAGEGKT) contributes to the ATP binding site.

It belongs to the formate--tetrahydrofolate ligase family.

The enzyme catalyses (6S)-5,6,7,8-tetrahydrofolate + formate + ATP = (6R)-10-formyltetrahydrofolate + ADP + phosphate. It functions in the pathway one-carbon metabolism; tetrahydrofolate interconversion. The protein is Formate--tetrahydrofolate ligase of Clostridium kluyveri (strain NBRC 12016).